Here is a 160-residue protein sequence, read N- to C-terminus: UPF0479 membrane protein YLL066W-A (160 aa).

2 helical membrane passes run 39-59 (IVFCLPFFPALFLVPVQKVLQ) and 136-156 (VPMIWLDVFQVFFVFLVISQH).

The protein belongs to the UPF0479 family.

The protein resides in the membrane. In Saccharomyces cerevisiae (strain ATCC 204508 / S288c) (Baker's yeast), this protein is UPF0479 membrane protein YLL066W-A.